The following is an 819-amino-acid chain: Ent-beyerene synthase KSL2, chloroplastic (819 aa).

The N-terminal 58 residues, 1 to 58 (MLPCLFPAYGSVVACKPSAIDRSPFGLLSQPKQTNRTLIRRPKVTKAFMAIEAMRHCS), are a transit peptide targeting the chloroplast. The segment covering 58-76 (SSSSSSEEGGAAATTAARS) has biased composition (low complexity). The disordered stretch occupies residues 58–77 (SSSSSSEEGGAAATTAARSA). 5 residues coordinate Mg(2+): aspartate 567, aspartate 571, asparagine 711, serine 715, and glutamate 719. The short motif at 567–571 (DDFFD) is the DDXXD motif element.

Belongs to the terpene synthase family. Requires Mg(2+) as cofactor. As to expression, expressed in roots. Highly expressed in stems, flowers and panicle.

The protein resides in the plastid. The protein localises to the chloroplast. The catalysed reaction is ent-copalyl diphosphate = ent-beyerene + diphosphate. It carries out the reaction ent-copalyl diphosphate = ent-kaur-16-ene + diphosphate. The protein operates within secondary metabolite biosynthesis; terpenoid biosynthesis. Diterpene cyclase involved in jasmonic acid-dependent defense mechanisms in roots by mediating the biosynthesis of labdane-related diterpenoids (LRDs) natural products such as ent-beyerene, an antimicrobial compound. Catalyzes the cyclization of ent-CDP into ent-beyerene as a major and ent-kaurene as a minor product. May be involved in the catalysis of an early step of the gibberellin (GA) biosynthesis pathway. The chain is Ent-beyerene synthase KSL2, chloroplastic from Oryza sativa subsp. japonica (Rice).